An 821-amino-acid chain; its full sequence is Maternal DNA replication licensing factor mcm6 (821 aa).

Residues 159–186 (CMDCQSVVKDVEQQFRYTQPTICKNPVC) form a C4-type zinc finger. Residues 347-554 (LYHNLCTSLF…TDYAIARRIV (208 aa)) form the MCM domain. Position 397-404 (397-404 (GDPSTSKS)) interacts with ATP. The Arginine finger motif lies at 529 to 532 (SRFD).

This sequence belongs to the MCM family. As to quaternary structure, component of the mcm2-7 complex (RLF-M). The complex forms a toroidal hexameric ring with the proposed subunit order mcm2-mcm6-mcm4-mcm7-mcm3-mcm5. The heterodimer of mmcm3/mcm5 interacts with mcm4, mmcm6, mcm7 and weakly with mcm2. Component of the CMG helicase complex, composed of the mcm2-7 complex, the GINS complex and cdc45.

Its subcellular location is the nucleus. It localises to the chromosome. It carries out the reaction ATP + H2O = ADP + phosphate + H(+). In terms of biological role, acts as a component of the mcm2-7 complex (mcm complex) which is the putative replicative helicase essential for 'once per cell cycle' DNA replication initiation and elongation in eukaryotic cells. The active ATPase sites in the mcm2-7 ring are formed through the interaction surfaces of two neighboring subunits such that a critical structure of a conserved arginine finger motif is provided in trans relative to the ATP-binding site of the Walker A box of the adjacent subunit. The six ATPase active sites, however, are likely to contribute differentially to the complex helicase activity. The existence of maternal and zygotic forms of mcm3 and mcm6 suggests that specific forms of mcm2-7 complexes may be used during different stages of development. The sequence is that of Maternal DNA replication licensing factor mcm6 from Xenopus tropicalis (Western clawed frog).